Consider the following 857-residue polypeptide: DNA mismatch repair protein MutS (857 aa).

Position 608 to 615 (608 to 615 (GPNMSGKS)) interacts with ATP.

This sequence belongs to the DNA mismatch repair MutS family.

This protein is involved in the repair of mismatches in DNA. It is possible that it carries out the mismatch recognition step. This protein has a weak ATPase activity. In Lacticaseibacillus casei (strain BL23) (Lactobacillus casei), this protein is DNA mismatch repair protein MutS.